A 235-amino-acid polypeptide reads, in one-letter code: uncharacterized protein (235 aa).

3 consecutive transmembrane segments (helical) span residues 41-61 (IFWH…IYRL), 71-91 (LRTF…IEFP), and 129-149 (IGII…TPTI).

Its subcellular location is the membrane. This is an uncharacterized protein from Schizosaccharomyces pombe (strain 972 / ATCC 24843) (Fission yeast).